The primary structure comprises 314 residues: Acetyl-coenzyme A carboxylase carboxyl transferase subunit beta (314 aa).

The CoA carboxyltransferase N-terminal domain occupies 24–293 (LWIKCPDTGQ…IDAAPEPSPA (270 aa)). Positions 283 to 314 (EIDAAPEPSPAAEEPAEPMPAPEAAAPSAPPA) are disordered. Low complexity-rich tracts occupy residues 284–295 (IDAAPEPSPAAE) and 304–314 (PEAAAPSAPPA).

It belongs to the AccD/PCCB family. As to quaternary structure, acetyl-CoA carboxylase is a heterohexamer composed of biotin carboxyl carrier protein (AccB), biotin carboxylase (AccC) and two subunits each of ACCase subunit alpha (AccA) and ACCase subunit beta (AccD).

It is found in the cytoplasm. It carries out the reaction N(6)-carboxybiotinyl-L-lysyl-[protein] + acetyl-CoA = N(6)-biotinyl-L-lysyl-[protein] + malonyl-CoA. Its pathway is lipid metabolism; malonyl-CoA biosynthesis; malonyl-CoA from acetyl-CoA: step 1/1. Functionally, component of the acetyl coenzyme A carboxylase (ACC) complex. Biotin carboxylase (BC) catalyzes the carboxylation of biotin on its carrier protein (BCCP) and then the CO(2) group is transferred by the transcarboxylase to acetyl-CoA to form malonyl-CoA. The sequence is that of Acetyl-coenzyme A carboxylase carboxyl transferase subunit beta from Nitrobacter hamburgensis (strain DSM 10229 / NCIMB 13809 / X14).